A 217-amino-acid polypeptide reads, in one-letter code: Large ribosomal subunit protein uL3 (217 aa).

Positions 129 to 162 (SRGPMSHGSKNHRAPGSTGAGTTPGRIYPGKRMA) are disordered. Residues 142–153 (APGSTGAGTTPG) show a composition bias toward low complexity.

It belongs to the universal ribosomal protein uL3 family. As to quaternary structure, part of the 50S ribosomal subunit. Forms a cluster with proteins L14 and L19.

One of the primary rRNA binding proteins, it binds directly near the 3'-end of the 23S rRNA, where it nucleates assembly of the 50S subunit. The chain is Large ribosomal subunit protein uL3 from Prochlorococcus marinus (strain MIT 9215).